The following is a 1176-amino-acid chain: Nitrite reductase [NAD(P)H] (1176 aa).

A disordered region spans residues 1–23 (MANTSLDMASSTSPSPSPESTTT). Over residues 10-23 (SSTSPSPSPESTTT) the composition is skewed to low complexity. Position 26 to 60 (26 to 60 (KRIVVVGLGMVGIAFIEKLIKLDTQRQYEIVVIGE)) interacts with FAD. Residue 183 to 215 (STGVVVGGGLLGLEAAKALMDLQVFGRVVVIER) coordinates NAD(+). 4 residues coordinate [2Fe-2S] cluster: C496, C498, C531, and C534. Residues C717, C723, C757, and C761 each contribute to the [4Fe-4S] cluster site. Residue C761 participates in siroheme binding. The 153-residue stretch at 942–1094 (SYFQGADDLP…VEERDDGMVY (153 aa)) folds into the Rieske; atypical domain. The [2Fe-2S] cluster site is built by C981 and H983. Low complexity-rich tracts occupy residues 998–1008 (PSPSSCSSSAL) and 1030–1049 (PTSSATPATTASSSCTTNPS). The segment at 998-1051 (PSPSSCSSSALPPSPPSTPPRSSSPVTSPPQSPTSSATPATTASSSCTTNPSGP) is disordered. [2Fe-2S] cluster-binding residues include C1058 and H1061. Positions 1124-1139 (LRELDELNKSKGVEGK) are enriched in basic and acidic residues. The interval 1124–1157 (LRELDELNKSKGVEGKKGRRGRKPGASEAGKEVG) is disordered.

It belongs to the nitrite and sulfite reductase 4Fe-4S domain family. Homodimer. It depends on siroheme as a cofactor. [4Fe-4S] cluster serves as cofactor. Requires FAD as cofactor. [2Fe-2S] cluster is required as a cofactor.

The catalysed reaction is NH4(+) + 3 NADP(+) + 2 H2O = nitrite + 3 NADPH + 5 H(+). It catalyses the reaction NH4(+) + 3 NAD(+) + 2 H2O = nitrite + 3 NADH + 5 H(+). It participates in nitrogen metabolism; nitrate reduction (assimilation). The sequence is that of Nitrite reductase [NAD(P)H] (nit-6) from Neurospora crassa (strain ATCC 24698 / 74-OR23-1A / CBS 708.71 / DSM 1257 / FGSC 987).